Consider the following 113-residue polypeptide: Iron-sulfur cluster insertion protein ErpA (113 aa).

Iron-sulfur cluster contacts are provided by cysteine 41, cysteine 105, and cysteine 107.

The protein belongs to the HesB/IscA family. Homodimer. It depends on iron-sulfur cluster as a cofactor.

Functionally, required for insertion of 4Fe-4S clusters for at least IspG. This chain is Iron-sulfur cluster insertion protein ErpA, found in Aliivibrio salmonicida (strain LFI1238) (Vibrio salmonicida (strain LFI1238)).